Consider the following 398-residue polypeptide: 1-deoxy-D-xylulose 5-phosphate reductoisomerase (398 aa).

8 residues coordinate NADPH: Thr-10, Gly-11, Ser-12, Ile-13, Gly-36, Lys-37, Asn-38, and Asn-124. Lys-125 contacts 1-deoxy-D-xylulose 5-phosphate. Glu-126 is an NADPH binding site. Asp-150 contributes to the Mn(2+) binding site. Residues Ser-151, Glu-152, Ser-186, and His-209 each coordinate 1-deoxy-D-xylulose 5-phosphate. Glu-152 contacts Mn(2+). Gly-215 contacts NADPH. Residues Ser-222, Asn-227, Lys-228, and Glu-231 each contribute to the 1-deoxy-D-xylulose 5-phosphate site. Glu-231 contacts Mn(2+).

Belongs to the DXR family. In terms of assembly, homodimer. It depends on Mg(2+) as a cofactor. The cofactor is Mn(2+).

The catalysed reaction is 2-C-methyl-D-erythritol 4-phosphate + NADP(+) = 1-deoxy-D-xylulose 5-phosphate + NADPH + H(+). The protein operates within isoprenoid biosynthesis; isopentenyl diphosphate biosynthesis via DXP pathway; isopentenyl diphosphate from 1-deoxy-D-xylulose 5-phosphate: step 1/6. Its function is as follows. Catalyzes the NADPH-dependent rearrangement and reduction of 1-deoxy-D-xylulose-5-phosphate (DXP) to 2-C-methyl-D-erythritol 4-phosphate (MEP). The sequence is that of 1-deoxy-D-xylulose 5-phosphate reductoisomerase from Escherichia coli O157:H7.